The sequence spans 287 residues: Protease HtpX (287 aa).

The next 2 helical transmembrane spans lie at 4–24 and 33–53; these read IFLLIATNMAILLVASIVMSI and GGLLVFAAIFGFGGAFISLAI. H139 lines the Zn(2+) pocket. The active site involves E140. H143 lines the Zn(2+) pocket. 2 helical membrane passes run 154 to 174 and 195 to 215; these read LIQGVVNTFVIFAARVVAGII and AVVFVLDMLFGILASIIVAYF. E220 contacts Zn(2+).

It belongs to the peptidase M48B family. Zn(2+) serves as cofactor.

It localises to the cell inner membrane. In Shewanella halifaxensis (strain HAW-EB4), this protein is Protease HtpX.